Reading from the N-terminus, the 292-residue chain is Polyamine aminopropyltransferase 1 (292 aa).

The PABS domain occupies 1 to 244; that stretch reads MELGMFRLNI…YVNSFVFASD (244 aa). An S-methyl-5'-thioadenosine-binding site is contributed by Gln35. Spermidine contacts are provided by His66 and Glu90. Residues Asp110 and 142–143 each bind S-methyl-5'-thioadenosine; that span reads DG. Asp163 (proton acceptor) is an active-site residue.

The protein belongs to the spermidine/spermine synthase family. As to quaternary structure, homodimer or homotetramer.

It is found in the cytoplasm. It catalyses the reaction norspermine + S-adenosyl 3-(methylsulfanyl)propylamine = caldopentamine + S-methyl-5'-thioadenosine + 2 H(+). The catalysed reaction is norspermidine + S-adenosyl 3-(methylsulfanyl)propylamine = norspermine + S-methyl-5'-thioadenosine + H(+). It carries out the reaction S-adenosyl 3-(methylsulfanyl)propylamine + spermidine = thermospermine + S-methyl-5'-thioadenosine + H(+). Functionally, involved in the biosynthesis of polyamines which are thought to support the growth of thermophilic microorganisms under high-temperature conditions. It seems that long-chain and branched-chain of polyamines effectively stabilize DNA and RNA, respectively. Catalyzes the irreversible transfer of a propylamine group from the amino donor S-adenosylmethioninamine (decarboxy-AdoMet) to norspermidine, spermidine and norspermine to yield norspermine, thermospermine and caldopentamine, respectively. It can also synthesize sym-norspermidine (bis(3-aminopropyl)amine) from 1,3-diaminopropane with a very low activity. The biosynthesis of caldohexamine and caldoheptamine from caldopentamine has been also observed. The chain is Polyamine aminopropyltransferase 1 from Hyperthermus butylicus (strain DSM 5456 / JCM 9403 / PLM1-5).